The sequence spans 626 residues: Janus kinase and microtubule-interacting protein 1 (626 aa).

Residues 1 to 22 are disordered; it reads MSKKGRSKGEKPEMETDAVQMA. The segment at 1–365 is mediates association with microtubules; sequence MSKKGRSKGE…KIKNLTRENV (365 aa). Coiled coils occupy residues 19–255 and 284–413; these read VQMA…EAER and ERDV…DDLS. The tract at residues 365-626 is mediates interaction with TYK2 and GABBR1; that stretch reads VEMKEKLSAQ…ILFEPKLKFM (262 aa). The residue at position 382 (S382) is a Phosphoserine. The segment covering 452-461 has biased composition (polar residues); that stretch reads ETLSETSYNT. The tract at residues 452-477 is disordered; that stretch reads ETLSETSYNTDRTDRTPATPEEDLDD. Position 470 is a phosphothreonine (T470). Residues 490-604 are a coiled coil; sequence QLTREYQALQ…EFRVLELEVR (115 aa).

It belongs to the JAKMIP family. As to quaternary structure, homodimer. Forms a complex with GABBR1 and KIF5B/kinesin-1. Interacts with JAK1 and TYK2. As to expression, predominantly expressed in neural tissues and lymphoid cells (at protein level). Isoform 2, isoform 3 and isoform 4 are specifically expressed in brain and retina. Isoform 1 and isoform 5 are also detected in liver, lung and skeletal muscle. Also detected in testis and to a lower extent spleen and intestine.

Its subcellular location is the cytoplasm. The protein localises to the cytoskeleton. It is found in the membrane. Its function is as follows. Associates with microtubules and may play a role in the microtubule-dependent transport of the GABA-B receptor. May play a role in JAK1 signaling and regulate microtubule cytoskeleton rearrangements. This is Janus kinase and microtubule-interacting protein 1 (JAKMIP1) from Homo sapiens (Human).